The primary structure comprises 424 residues: L-rhamnose isomerase (424 aa).

Histidine 261, aspartate 293, and aspartate 295 together coordinate Mn(2+).

The protein belongs to the rhamnose isomerase family. Mn(2+) is required as a cofactor.

It localises to the cytoplasm. The catalysed reaction is L-rhamnopyranose = L-rhamnulose. It participates in carbohydrate degradation; L-rhamnose degradation; glycerone phosphate from L-rhamnose: step 1/3. Its function is as follows. Catalyzes the interconversion of L-rhamnose and L-rhamnulose. The chain is L-rhamnose isomerase from Bacillus subtilis (strain 168).